Consider the following 224-residue polypeptide: MVAAVLLGLSWLCSPLGALVLDFNNIRSSADLHGARKGSQCLSDTDCNTRKFCLQPRDEKPFCATCRGLRRRCQRDAMCCPGTLCVNDVCTTMEDATPILERQLDEQDGTHAEGTTGHPVQENQPKRKPSIKKSQGRKGQEGESCLRTFDCGPGLCCARHFWTKICKPVLLEGQVCSRRGHKDTAQAPEIFQRCDCGPGLLCRSQLTSNRQHARLRVCQKIEKL.

The signal sequence occupies residues 1–18 (MVAAVLLGLSWLCSPLGA). The DKK-type Cys-1 stretch occupies residues 41-90 (CLSDTDCNTRKFCLQPRDEKPFCATCRGLRRRCQRDAMCCPGTLCVNDVC). Positions 109-139 (GTHAEGTTGHPVQENQPKRKPSIKKSQGRKG) are disordered. Positions 126–136 (KRKPSIKKSQG) are enriched in basic residues. Intrachain disulfides connect Cys145–Cys157, Cys151–Cys166, Cys156–Cys194, Cys176–Cys202, and Cys196–Cys218. The DKK-type Cys-2 stretch occupies residues 145–218 (CLRTFDCGPG…NRQHARLRVC (74 aa)).

This sequence belongs to the dickkopf family. In terms of assembly, interacts with LRP5 and LRP6. Post-translationally, appears to be not glycosylated. In terms of processing, can be proteolytically processed by a furin-like protease. As to expression, expressed in cerebellum, T-cells, esophagus and lung.

It is found in the secreted. Functionally, antagonizes canonical Wnt signaling by inhibiting LRP5/6 interaction with Wnt and by forming a ternary complex with the transmembrane protein KREMEN that promotes internalization of LRP5/6. DKKs play an important role in vertebrate development, where they locally inhibit Wnt regulated processes such as antero-posterior axial patterning, limb development, somitogenesis and eye formation. In the adult, Dkks are implicated in bone formation and bone disease, cancer and Alzheimer disease. This Homo sapiens (Human) protein is Dickkopf-related protein 4 (DKK4).